A 968-amino-acid chain; its full sequence is RNA polymerase-associated protein RapA (968 aa).

In terms of domain architecture, Helicase ATP-binding spans 164–334; the sequence is DVGRRHAPRV…FARLRLLDPN (171 aa). 177–184 contacts ATP; sequence DEVGLGKT. The DEAH box signature appears at 280 to 283; it reads DEAH. The Helicase C-terminal domain occupies 490–662; sequence RVEWLMGYLT…YLASPDQTEG (173 aa).

It belongs to the SNF2/RAD54 helicase family. RapA subfamily. In terms of assembly, interacts with the RNAP. Has a higher affinity for the core RNAP than for the holoenzyme. Its ATPase activity is stimulated by binding to RNAP.

Its function is as follows. Transcription regulator that activates transcription by stimulating RNA polymerase (RNAP) recycling in case of stress conditions such as supercoiled DNA or high salt concentrations. Probably acts by releasing the RNAP, when it is trapped or immobilized on tightly supercoiled DNA. Does not activate transcription on linear DNA. Probably not involved in DNA repair. The polypeptide is RNA polymerase-associated protein RapA (Escherichia coli O139:H28 (strain E24377A / ETEC)).